Consider the following 1406-residue polypeptide: EF-hand calcium-binding domain-containing protein 5 (1406 aa).

The segment at 255–655 (NKDLPQQQRD…KACEPKPQHV (401 aa)) is disordered. 8 stretches are compositionally biased toward polar residues: residues 258 to 294 (LPQQ…SLTG), 322 to 334 (RRSS…QQRG), 342 to 354 (RRSS…QQRG), 362 to 373 (RRSSTVEQTRQR), 382 to 393 (RRSSTVEQTQRR), 402 to 414 (RRSS…QQRG), 422 to 434 (RRSS…QQRG), and 442 to 464 (RRSS…SLPE). Basic and acidic residues predominate over residues 465–477 (QESHRGSITEGSH). The segment covering 501–513 (DDSGSAGSRRGSG) has biased composition (low complexity). Positions 564–577 (QELDEDSTPQLEDD) are enriched in acidic residues. Basic and acidic residues-rich tracts occupy residues 578–598 (SALK…EEKP) and 638–655 (SKRD…PQHV). The region spanning 773 to 808 (RRRILLQAIFEKWDNDGSGFLDLNEVDDLLYTYKEG) is the EF-hand domain. Ca(2+) contacts are provided by aspartate 786, aspartate 788, serine 790, and glutamate 797.

In Mus musculus (Mouse), this protein is EF-hand calcium-binding domain-containing protein 5 (Efcab5).